The sequence spans 259 residues: Ubiquinone biosynthesis protein COQ4 homolog, mitochondrial (259 aa).

Positions 162, 163, 166, and 178 each coordinate Zn(2+).

This sequence belongs to the COQ4 family. Component of a multi-subunit COQ enzyme complex. Requires Zn(2+) as cofactor.

It localises to the mitochondrion inner membrane. The enzyme catalyses a 4-hydroxy-3-methoxy-5-(all-trans-polyprenyl)benzoate + H(+) = a 2-methoxy-6-(all-trans-polyprenyl)phenol + CO2. It functions in the pathway cofactor biosynthesis; ubiquinone biosynthesis. Functionally, lyase that catalyzes the C1-decarboxylation of 4-hydroxy-3-methoxy-5-(all-trans-polyprenyl)benzoic acid into 2-methoxy-6-(all-trans-polyprenyl)phenol during ubiquinone biosynthesis. This chain is Ubiquinone biosynthesis protein COQ4 homolog, mitochondrial, found in Bombyx mori (Silk moth).